Reading from the N-terminus, the 274-residue chain is Cytochrome b-c1 complex subunit Rieske, mitochondrial (274 aa).

Residues 79 to 103 (SHTDIKVPDFSDYRRPEVLDSTKSS) lie on the Mitochondrial matrix side of the membrane. The chain crosses the membrane as a helical span at residues 104–140 (KESSEARKGFSYLVTATTTVGVAYAAKNVVSQFVSSM). Topologically, residues 141–274 (SASADVLAMS…FTSDDMVIVG (134 aa)) are mitochondrial intermembrane. The Rieske domain maps to 187–272 (EAAVEVSQLR…YEFTSDDMVI (86 aa)). The [2Fe-2S] cluster site is built by C217, H219, C236, H239, and S241. Residues C222 and C238 are joined by a disulfide bond.

This sequence belongs to the Rieske iron-sulfur protein family. In terms of assembly, component of the ubiquinol-cytochrome c oxidoreductase (cytochrome b-c1 complex, complex III, CIII), a multisubunit enzyme composed of 11 subunits. The complex is composed of 3 respiratory subunits cytochrome b, cytochrome c1 and Rieske protein UQCRFS1, 2 core protein subunits UQCRC1/QCR1 and UQCRC2/QCR2, and 6 low-molecular weight protein subunits UQCRH/QCR6, UQCRB/QCR7, UQCRQ/QCR8, UQCR10/QCR9, UQCR11/QCR10 and subunit 9, the cleavage product of Rieske protein UQCRFS1. The complex exists as an obligatory dimer and forms supercomplexes (SCs) in the inner mitochondrial membrane with NADH-ubiquinone oxidoreductase (complex I, CI) and cytochrome c oxidase (complex IV, CIV), resulting in different assemblies (supercomplex SCI(1)III(2)IV(1) and megacomplex MCI(2)III(2)IV(2)). Incorporation of the Rieske protein UQCRFS1 is the penultimate step in complex III assembly. Interacts with TTC19, which is involved in the clearance of UQCRFS1 fragments. Component of the ubiquinol-cytochrome c oxidoreductase (cytochrome b-c1 complex, complex III, CIII). Subunit 9 corresponds to the mitochondrial targeting sequence (MTS) of Rieske protein UQCRFS1. It is retained after processing and incorporated inside complex III, where it remains bound to the complex and localizes between the 2 core subunits UQCRC1/QCR1 and UQCRC2/QCR2. [2Fe-2S] cluster is required as a cofactor. Proteolytic processing is necessary for the correct insertion of UQCRFS1 in the complex III dimer. Several fragments are generated during UQCRFS1 insertion, most probably due to the endogenous matrix-processing peptidase (MPP) activity of the 2 core protein subunits UQCRC1/QCR1 and UQCRC2/QCR2, which are homologous to the 2 mitochondrial-processing peptidase (MPP) subunits beta-MPP and alpha-MPP respectively. The action of the protease is also necessary for the clearance of the UQCRFS1 fragments.

It is found in the mitochondrion inner membrane. It catalyses the reaction a quinol + 2 Fe(III)-[cytochrome c](out) = a quinone + 2 Fe(II)-[cytochrome c](out) + 2 H(+)(out). In terms of biological role, component of the ubiquinol-cytochrome c oxidoreductase, a multisubunit transmembrane complex that is part of the mitochondrial electron transport chain which drives oxidative phosphorylation. The respiratory chain contains 3 multisubunit complexes succinate dehydrogenase (complex II, CII), ubiquinol-cytochrome c oxidoreductase (cytochrome b-c1 complex, complex III, CIII) and cytochrome c oxidase (complex IV, CIV), that cooperate to transfer electrons derived from NADH and succinate to molecular oxygen, creating an electrochemical gradient over the inner membrane that drives transmembrane transport and the ATP synthase. The cytochrome b-c1 complex catalyzes electron transfer from ubiquinol to cytochrome c, linking this redox reaction to translocation of protons across the mitochondrial inner membrane, with protons being carried across the membrane as hydrogens on the quinol. In the process called Q cycle, 2 protons are consumed from the matrix, 4 protons are released into the intermembrane space and 2 electrons are passed to cytochrome c. The Rieske protein is a catalytic core subunit containing a [2Fe-2S] iron-sulfur cluster. It cycles between 2 conformational states during catalysis to transfer electrons from the quinol bound in the Q(0) site in cytochrome b to cytochrome c1. Incorporation of UQCRFS1 is the penultimate step in complex III assembly. Functionally, component of the ubiquinol-cytochrome c oxidoreductase (cytochrome b-c1 complex, complex III, CIII). UQCRFS1 undergoes proteolytic processing once it is incorporated in the complex III dimer. One of the fragments, called subunit 9, corresponds to its mitochondrial targeting sequence (MTS). The proteolytic processing is necessary for the correct insertion of UQCRFS1 in the complex III dimer, but the persistence of UQCRFS1-derived fragments may prevent newly imported UQCRFS1 to be processed and assembled into complex III and is detrimental for the complex III structure and function. The protein is Cytochrome b-c1 complex subunit Rieske, mitochondrial (UQCRFS1) of Bos taurus (Bovine).